Reading from the N-terminus, the 361-residue chain is Mitochondrial import receptor subunit TOM40 homolog (361 aa).

Over residues 1-10 (MGNVLAASSP) the composition is skewed to low complexity. Residues 1–71 (MGNVLAASSP…TASASGAAED (71 aa)) are disordered. A compositionally biased stretch (pro residues) spans 11–36 (PAGPPPPPAPALVGLPPPPPSPPGFT). Low complexity-rich tracts occupy residues 37–52 (LPPL…STSR) and 59–71 (GAAT…AAED).

This sequence belongs to the Tom40 family. In terms of assembly, forms part of the preprotein translocase complex of the outer mitochondrial membrane (TOM complex) which consists of at least 7 different proteins (TOMM5, TOMM6, TOMM7, TOMM20, TOMM22, TOMM40 and TOMM70). Interacts with mitochondrial targeting sequences. Interacts with TIMM29; linking the TIM22 complex to the TOM complex. Forms a complex with BCAP31 (via C-terminus) which mediates the translocation of components of the mitochondrial membrane respiratory chain NADH dehydrogenase (Complex I) from the cytosol to the mitochondria. Interacts (via N-terminus) with CYP1A1 (via mitochondrial targeting signal); this interaction is required for CYP1A1 translocation across the mitochondrial outer membrane.

Its subcellular location is the mitochondrion outer membrane. Channel-forming protein essential for import of protein precursors into mitochondria. Plays a role in the assembly of the mitochondrial membrane respiratory chain NADH dehydrogenase (Complex I) by forming a complex with BCAP31 and mediating the translocation of Complex I components from the cytosol to the mitochondria. This is Mitochondrial import receptor subunit TOM40 homolog (TOMM40) from Homo sapiens (Human).